Consider the following 749-residue polypeptide: Dynamin-1-like protein (749 aa).

Met1 is modified (N-acetylmethionine). In terms of domain architecture, Dynamin-type G spans Ile22–Pro315. Residues Gly32–Ser39 form a G1 motif region. Residue Gly32 to Ser40 participates in GTP binding. A G2 motif region spans residues Val58 to Arg60. The disordered stretch occupies residues Asp74–His93. The tract at residues Asp159–Gly162 is G3 motif. Residues Thr228–Asp231 form a G4 motif region. GTP contacts are provided by residues Thr228–Asp234 and Asn259–Gln262. The segment at Val258–Ser261 is G5 motif. Residues Tyr357–Ile502 are middle domain. Positions Asn461–Glu698 are interaction with GSK3B. The tract at residues Ala515–Asn582 is b domain. A disordered region spans residues Glu536–Gly604. Ser542 carries the post-translational modification Phosphoserine. Residues Lys545 and Lys548 each participate in a glycyl lysine isopeptide (Lys-Gly) (interchain with G-Cter in SUMO) cross-link. Positions Pro550 to Glu567 are enriched in low complexity. Ser561 carries the phosphoserine modification. Over residues Ala568–Lys581 the composition is skewed to basic and acidic residues. Residues Lys571 and Lys581 each participate in a glycyl lysine isopeptide (Lys-Gly) (interchain with G-Cter in SUMO) cross-link. Thr598 and Thr599 each carry an O-linked (GlcNAc) threonine glycan. A Glycyl lysine isopeptide (Lys-Gly) (interchain with G-Cter in SUMO) cross-link involves residue Lys607. Position 610 is an N6-acetyllysine; alternate (Lys610). A Glycyl lysine isopeptide (Lys-Gly) (interchain with G-Cter in SUMO); alternate cross-link involves residue Lys610. Residue Lys619 forms a Glycyl lysine isopeptide (Lys-Gly) (interchain with G-Cter in SUMO) linkage. Ser620 is subject to Phosphoserine. Lys621 is covalently cross-linked (Glycyl lysine isopeptide (Lys-Gly) (interchain with G-Cter in SUMO)). Ser629 carries the post-translational modification Phosphoserine; by CDK1 and PINK1. At Ser650 the chain carries Phosphoserine; by CAMK1 and PKA. An S-nitrosocysteine modification is found at Cys657. One can recognise a GED domain in the interval Cys657 to Leu748. Residues Tyr667–Lys681 form an important for homodimerization region.

It belongs to the TRAFAC class dynamin-like GTPase superfamily. Dynamin/Fzo/YdjA family. In terms of assembly, homotetramer; dimerizes through the N-terminal GTP-middle region of one molecule binding to the GED domain of another DNM1L molecule. Oligomerizes in a GTP-dependent manner to form membrane-associated tubules with a spiral pattern. Interacts with GSK3B and MARCHF5. Interacts (via the GTPase and B domains) with UBE2I; the interaction promotes sumoylation of DNM1L, mainly in its B domain. Interacts with PPP3CA; the interaction dephosphorylates DNM1L and regulates its transition to mitochondria. Interacts with BCL2L1 isoform BCL-X(L) and CLTA; DNM1L and BCL2L1 isoform BCL-X(L) may form a complex in synaptic vesicles that also contains clathrin and MFF. Interacts with MFF; the interaction is inhinited by C11orf65/MFI. Interacts with FIS1. Interacts with MIEF2 and MIEF1; GTP-dependent, regulates GTP hydrolysis and DNM1L oligomerization. Interacts with PGAM5; this interaction leads to dephosphorylation at Ser-656 and activation of GTPase activity and eventually to mitochondria fragmentation. Interacts with RALBP1; during mitosis, recruits DNM1L to the mitochondrion and mediates its activation by the mitotic kinase cyclin B-CDK1. Post-translationally, phosphorylation/dephosphorylation events on two sites near the GED domain regulate mitochondrial fission. Phosphorylation on Ser-650 by CAMK1 and PKA inhibits the GTPase activity, leading to a defect in mitochondrial fission promoting mitochondrial elongation. Dephosphorylated on this site by PPP3CA which promotes mitochondrial fission. Phosphorylation on Ser-629 by CDK1 and PINK1 activates the GTPase activity and promotes mitochondrial fission. Phosphorylated in a circadian manner at Ser-650. Sumoylated on various lysine residues within the B domain, probably by MUL1. Sumoylation positively regulates mitochondrial fission. Desumoylated by SENP5 during G2/M transition of mitosis. Appears to be linked to its catalytic activity. In terms of processing, S-nitrosylation increases DNM1L dimerization, mitochondrial fission and causes neuronal damage. Post-translationally, O-GlcNAcylation augments the level of the GTP-bound active form of DNM1L and induces translocation from the cytoplasm to mitochondria in cardiomyocytes. It also decreases phosphorylation at Ser-650. Ubiquitination by MARCHF5 affects mitochondrial morphology.

It localises to the cytoplasm. It is found in the cytosol. Its subcellular location is the golgi apparatus. The protein localises to the endomembrane system. The protein resides in the mitochondrion outer membrane. It localises to the peroxisome. It is found in the membrane. Its subcellular location is the clathrin-coated pit. The protein localises to the cytoplasmic vesicle. The protein resides in the secretory vesicle. It localises to the synaptic vesicle membrane. The enzyme catalyses GTP + H2O = GDP + phosphate + H(+). Its function is as follows. Functions in mitochondrial and peroxisomal division. Mediates membrane fission through oligomerization into membrane-associated tubular structures that wrap around the scission site to constrict and sever the mitochondrial membrane through a GTP hydrolysis-dependent mechanism. The specific recruitment at scission sites is mediated by membrane receptors like MFF, MIEF1 and MIEF2 for mitochondrial membranes. While the recruitment by the membrane receptors is GTP-dependent, the following hydrolysis of GTP induces the dissociation from the receptors and allows DNM1L filaments to curl into closed rings that are probably sufficient to sever a double membrane. Acts downstream of PINK1 to promote mitochondrial fission in a PRKN-dependent manner. Plays an important role in mitochondrial fission during mitosis. Through its function in mitochondrial division, ensures the survival of at least some types of postmitotic neurons, including Purkinje cells, by suppressing oxidative damage. Required for normal brain development, including that of cerebellum. Facilitates developmentally regulated apoptosis during neural tube formation. Required for a normal rate of cytochrome c release and caspase activation during apoptosis; this requirement may depend upon the cell type and the physiological apoptotic cues. Required for formation of endocytic vesicles. Proposed to regulate synaptic vesicle membrane dynamics through association with BCL2L1 isoform Bcl-X(L) which stimulates its GTPase activity in synaptic vesicles; the function may require its recruitment by MFF to clathrin-containing vesicles. Required for programmed necrosis execution. Rhythmic control of its activity following phosphorylation at Ser-650 is essential for the circadian control of mitochondrial ATP production. The sequence is that of Dynamin-1-like protein from Bos taurus (Bovine).